The chain runs to 276 residues: Digeranylgeranylglyceryl phosphate synthase (276 aa).

Helical transmembrane passes span 12–34, 38–60, 84–104, 107–127, 146–166, 202–222, 224–244, and 256–276; these read PHNC…GSVP, ILIL…NDYF, ALWY…LISL, FAFA…LKPL, GAIA…AFLV, VAAF…KAGV, VGYY…YLIL, and QLLL…AALM.

Belongs to the UbiA prenyltransferase family. DGGGP synthase subfamily. It depends on Mg(2+) as a cofactor.

The protein localises to the cell membrane. The enzyme catalyses sn-3-O-(geranylgeranyl)glycerol 1-phosphate + (2E,6E,10E)-geranylgeranyl diphosphate = 2,3-bis-O-(geranylgeranyl)-sn-glycerol 1-phosphate + diphosphate. It functions in the pathway membrane lipid metabolism; glycerophospholipid metabolism. Prenyltransferase that catalyzes the transfer of the geranylgeranyl moiety of geranylgeranyl diphosphate (GGPP) to the C2 hydroxyl of (S)-3-O-geranylgeranylglyceryl phosphate (GGGP). This reaction is the second ether-bond-formation step in the biosynthesis of archaeal membrane lipids. This chain is Digeranylgeranylglyceryl phosphate synthase, found in Thermococcus gammatolerans (strain DSM 15229 / JCM 11827 / EJ3).